The sequence spans 530 residues: Light-independent protochlorophyllide reductase subunit B (530 aa).

Asp36 is a binding site for [4Fe-4S] cluster. Residue Asp290 is the Proton donor of the active site. A substrate-binding site is contributed by 425-426; sequence GL.

Belongs to the ChlB/BchB/BchZ family. In terms of assembly, protochlorophyllide reductase is composed of three subunits; ChlL, ChlN and ChlB. Forms a heterotetramer of two ChlB and two ChlN subunits. The cofactor is [4Fe-4S] cluster.

The catalysed reaction is chlorophyllide a + oxidized 2[4Fe-4S]-[ferredoxin] + 2 ADP + 2 phosphate = protochlorophyllide a + reduced 2[4Fe-4S]-[ferredoxin] + 2 ATP + 2 H2O. It participates in porphyrin-containing compound metabolism; chlorophyll biosynthesis (light-independent). In terms of biological role, component of the dark-operative protochlorophyllide reductase (DPOR) that uses Mg-ATP and reduced ferredoxin to reduce ring D of protochlorophyllide (Pchlide) to form chlorophyllide a (Chlide). This reaction is light-independent. The NB-protein (ChlN-ChlB) is the catalytic component of the complex. This chain is Light-independent protochlorophyllide reductase subunit B, found in Synechococcus sp. (strain WH7803).